A 365-amino-acid polypeptide reads, in one-letter code: Phospho-N-acetylmuramoyl-pentapeptide-transferase (365 aa).

Helical transmembrane passes span 22 to 42, 74 to 94, 95 to 115, 134 to 154, 168 to 188, 201 to 221, 240 to 260, 267 to 287, 292 to 312, and 342 to 362; these read YISV…LALG, TMGG…WGDL, TSIY…IGFF, KFAL…YLLS, SLYI…IING, GLAI…AYIE, LAEV…FLWF, VFMG…IAVM, LIFF…MLQV, and KVVI…LAAI.

The protein belongs to the glycosyltransferase 4 family. MraY subfamily. It depends on Mg(2+) as a cofactor.

The protein resides in the cell inner membrane. The catalysed reaction is UDP-N-acetyl-alpha-D-muramoyl-L-alanyl-gamma-D-glutamyl-meso-2,6-diaminopimeloyl-D-alanyl-D-alanine + di-trans,octa-cis-undecaprenyl phosphate = di-trans,octa-cis-undecaprenyl diphospho-N-acetyl-alpha-D-muramoyl-L-alanyl-D-glutamyl-meso-2,6-diaminopimeloyl-D-alanyl-D-alanine + UMP. The protein operates within cell wall biogenesis; peptidoglycan biosynthesis. Catalyzes the initial step of the lipid cycle reactions in the biosynthesis of the cell wall peptidoglycan: transfers peptidoglycan precursor phospho-MurNAc-pentapeptide from UDP-MurNAc-pentapeptide onto the lipid carrier undecaprenyl phosphate, yielding undecaprenyl-pyrophosphoryl-MurNAc-pentapeptide, known as lipid I. In Francisella tularensis subsp. mediasiatica (strain FSC147), this protein is Phospho-N-acetylmuramoyl-pentapeptide-transferase.